Here is a 381-residue protein sequence, read N- to C-terminus: MSDSKEPRLQQLGLLEEEQLGGVGFRQTRGYKSLAGCLGHGPLVLQLLSFTLLAGLLVQVSKVPSSLSQGQSKQDAIYQNLTQLKVAVSELSEKSKQQEIYQELTRLKAAVGELPEKSKQQEIYQELTRLKAAVGELPEKSKLQEIYQELTRLKAAVGELPEKSKQQEIYQELSQLKAAVGDLPEKSKQQEIYQKLTQLKAAVDGLPDRSKQQEIYQELIQLKAAVERLCRPCPWEWTFFQGNCYFMSNSQRNWHNSITACQEVGAQLVVIKSAEEQNFLQLQSSRSNRFTWMGLSDLNHEGTWQWVDGSPLLPSFKQYWNKGEPNNIGEEDCAEFSGNGWNDDKCNLAKFWICKKSAASCSGDEERLLSPTPTTPNPPPE.

The Cytoplasmic segment spans residues 1-37 (MSDSKEPRLQQLGLLEEEQLGGVGFRQTRGYKSLAGC). 3 short sequence motifs (endocytosis signal) span residues 14 to 15 (LL), 16 to 18 (EEE), and 31 to 34 (YKSL). Residues 38–58 (LGHGPLVLQLLSFTLLAGLLV) traverse the membrane as a helical; Signal-anchor for type II membrane protein segment. At 59-381 (QVSKVPSSLS…TPTTPNPPPE (323 aa)) the chain is on the extracellular side. An N-linked (GlcNAc...) asparagine glycan is attached at asparagine 80. Repeat copies occupy residues 96 to 118 (KQQEIYQELTRLKAAVGELPEKS), 119 to 141 (KQQEIYQELTRLKAAVGELPEKS), 142 to 164 (KLQEIYQELTRLKAAVGELPEKS), 165 to 187 (KQQEIYQELSQLKAAVGDLPEKS), 188 to 210 (KQQEIYQKLTQLKAAVDGLPDRS), and 211 to 234 (KQQEIYQELIQLKAAVERLCRPCP). Residues 96-303 (KQQEIYQELT…GLSDLNHEGT (208 aa)) are 6 X approximate tandem repeats. Intrachain disulfides connect cysteine 233/cysteine 244, cysteine 261/cysteine 354, and cysteine 333/cysteine 346. The 116-residue stretch at 240 to 355 (FQGNCYFMSN…CNLAKFWICK (116 aa)) folds into the C-type lectin domain. Residues glutamate 324, asparagine 326, isoleucine 328, glutamate 331, asparagine 342, and aspartate 343 each contribute to the Ca(2+) site. Residues 359–381 (ASCSGDEERLLSPTPTTPNPPPE) are disordered.

As to quaternary structure, homotetramer. Interacts with C1QBP; the interaction is indicative for a C1q:C1QBP:CD209 signaling complex. Interacts with ICAM2 and ICAM3 by binding to mannose-like carbohydrates. Interacts (via C-type lectin domain) with CEACAM1 (via Lewis X moieties); this interaction is regulated by the glycosylation pattern of CEACAM1 on cell types and regulates contact between dendritic cells and neutrophils. As to expression, expressed in lymph nodes.

It is found in the membrane. In terms of biological role, pathogen-recognition receptor expressed on the surface of immature dendritic cells (DCs) and involved in initiation of primary immune response. Thought to mediate the endocytosis of pathogens which are subsequently degraded in lysosomal compartments. The receptor returns to the cell membrane surface and the pathogen-derived antigens are presented to resting T-cells via MHC class II proteins to initiate the adaptive immune response. Probably recognizes in a calcium-dependent manner high mannose N-linked oligosaccharides in a variety of pathogen antigens. On DCs it is a high affinity receptor for ICAM2 and ICAM3 by binding to mannose-like carbohydrates. May act as a DC rolling receptor that mediates transendothelial migration of DC presursors from blood to tissues by binding endothelial ICAM2. Seems to regulate DC-induced T-cell proliferation by binding to ICAM3 on T-cells in the immunological synapse formed between DC and T-cells. This Chlorocebus aethiops (Green monkey) protein is CD209 antigen (CD209).